The following is a 293-amino-acid chain: Autophagy-related protein 36 (293 aa).

2 stretches are compositionally biased toward polar residues: residues 98 to 108 (ISSDSNKNSPP) and 260 to 273 (GETL…ASSS). Disordered stretches follow at residues 98-121 (ISSD…NIRS) and 250-273 (SRSR…ASSS).

As to quaternary structure, interacts with PEX3, ATG8 and ATG11.

Its subcellular location is the peroxisome. Functionally, required for autophagic breakdown of peroxisomes, called pexophagy, through linking peroxisomes to the autophagy apparatus. Involved in regulation of the glyoxylate cycle. The polypeptide is Autophagy-related protein 36 (ATG36) (Saccharomyces cerevisiae (strain ATCC 204508 / S288c) (Baker's yeast)).